An 850-amino-acid chain; its full sequence is Tripartite terminase subunit 1 (850 aa).

Residues 191 to 219 form a C3H1-type zinc finger; the sequence is CAQCYEELTIIPNQGRSLNKRLQGLLCNH. The tract at residues 438 to 489 is disordered; it reads GTTLMTASNSSNSSTHSQRNNGGGGRARGGGKKVVGGGVNGQDGDGSENGLR. Positions 439-457 are enriched in low complexity; sequence TTLMTASNSSNSSTHSQRN. Gly residues predominate over residues 458–481; that stretch reads NGGGGRARGGGKKVVGGGVNGQDG. 709-716 lines the ATP pocket; it reads YNETFGKQ. The disordered stretch occupies residues 801–831; it reads WLPSPYPSSSTAGVSRRVRATRKRPRRASSL. Positions 816 to 827 are enriched in basic residues; the sequence is RRVRATRKRPRR. The Nuclear localization signal signature appears at 822 to 827; it reads RKRPRR.

It belongs to the herpesviridae TRM1 protein family. Associates with TRM2 and TRM3 to form the tripartite terminase complex. Interacts with portal protein.

It localises to the host nucleus. In terms of biological role, component of the molecular motor that translocates viral genomic DNA in empty capsid during DNA packaging. Forms a tripartite terminase complex together with TRM2 and TRM3 in the host cytoplasm. Once the complex reaches the host nucleus, it interacts with the capsid portal vertex. This portal forms a ring in which genomic DNA is translocated into the capsid. TRM1 carries an endonuclease activity that plays an important role for the cleavage of concatemeric viral DNA into unit length genomes. The protein is Tripartite terminase subunit 1 of Homo sapiens (Human).